A 118-amino-acid chain; its full sequence is Flowering-promoting factor 1-like protein 4 (118 aa).

Belongs to the FPF1 family.

The protein is Flowering-promoting factor 1-like protein 4 of Oryza sativa subsp. japonica (Rice).